A 106-amino-acid chain; its full sequence is MKYSLIFILTLACLIASSLARPEGEEKPADDAAGDKKEEGAEGDKTAAGGDEGFTGGDGKNAGGAGNPMKVVQDIIKKITDAVNPLRMTEGFLGGGGSGGSGALFG.

A signal peptide spans 1-20; that stretch reads MKYSLIFILTLACLIASSLA. The interval 20 to 66 is disordered; the sequence is ARPEGEEKPADDAAGDKKEEGAEGDKTAAGGDEGFTGGDGKNAGGAG. The segment covering 22-45 has biased composition (basic and acidic residues); sequence PEGEEKPADDAAGDKKEEGAEGDK. The segment covering 50–66 has biased composition (gly residues); it reads GDEGFTGGDGKNAGGAG.

Its subcellular location is the secreted. In Glossina morsitans morsitans (Savannah tsetse fly), this protein is Glycine/glutamate-rich protein sgp1 (sgp1).